Here is a 381-residue protein sequence, read N- to C-terminus: MSSYRPYQHIERRKSRQIHVGKVAVGGDAPISVQTMTNTLTSDAQATIEQIRRAELAGVDIVRVSCPDEASTAALEEIVREVNVPIVADIHFHYKRAIEAAKAGAACLRINPGNIGSAERVREVVNAARDYGCSIRIGVNAGSLEKHLLEKYGEPNPEALVESALEHAKILEDHDFHEFKISVKASDVFMAVAAYQQLADCCDHPLHIGITEAGSKRAGTVKSSIGLGNLLWAGVGDTMRVSLSAAPEEEVLVGWDILKSLGLRHRGVKIISCPSCARQGFNVVETVQTLEDRLQHIKTPLTLSIIGCVVNGPGEALMTDIGVTGGGNGRHMVYAAGRQDHTMPAGDMIEHIVELVEKKVSDIEAGKVEASTAKQMDPAAS.

Residues Cys273, Cys276, Cys308, and Glu315 each contribute to the [4Fe-4S] cluster site.

It belongs to the IspG family. The cofactor is [4Fe-4S] cluster.

The enzyme catalyses (2E)-4-hydroxy-3-methylbut-2-enyl diphosphate + oxidized [flavodoxin] + H2O + 2 H(+) = 2-C-methyl-D-erythritol 2,4-cyclic diphosphate + reduced [flavodoxin]. The protein operates within isoprenoid biosynthesis; isopentenyl diphosphate biosynthesis via DXP pathway; isopentenyl diphosphate from 1-deoxy-D-xylulose 5-phosphate: step 5/6. Converts 2C-methyl-D-erythritol 2,4-cyclodiphosphate (ME-2,4cPP) into 1-hydroxy-2-methyl-2-(E)-butenyl 4-diphosphate. The sequence is that of 4-hydroxy-3-methylbut-2-en-1-yl diphosphate synthase (flavodoxin) from Gluconobacter oxydans (strain 621H) (Gluconobacter suboxydans).